The following is a 64-amino-acid chain: Putative antitoxin VapB51 (64 aa).

In terms of biological role, possibly the antitoxin component of a type II toxin-antitoxin (TA) system. Its cognate toxin is VapC51. In Mycobacterium tuberculosis (strain ATCC 25618 / H37Rv), this protein is Putative antitoxin VapB51.